A 402-amino-acid chain; its full sequence is Bacteriochlorophyllide c C-7(1)-hydroxylase (402 aa).

The region spanning 104 to 359 (VIGMNQDIIN…IKYQDRFDMP (256 aa)) is the Radical SAM core domain. Residues C120, C129, and C132 each coordinate [4Fe-4S] cluster.

It belongs to the radical SAM superfamily. The cofactor is [4Fe-4S] cluster.

It catalyses the reaction a bacteriochlorophyllide c + 2 S-adenosyl-L-methionine + H2O = a bacteriochlorophyllide e + 2 5'-deoxyadenosine + 2 L-methionine + 2 H(+). It carries out the reaction a bacteriochlorophyllide d + 2 S-adenosyl-L-methionine + H2O = a bacteriochlorophyllide f + 2 5'-deoxyadenosine + 2 L-methionine + 2 H(+). It participates in porphyrin-containing compound metabolism; bacteriochlorophyll biosynthesis. Its function is as follows. Involved in the biosynthesis of bacteriochlorophyll e (BChl e). Catalyzes two consecutive hydroxylation reactions of the C-7 methyl group of bacteriochlorophyllide c (BChlide c) to form a geminal diol intermediate that spontaneously dehydrates to produce the formyl group of bacteriochlorophyllide e (BChlide e). Also able to catalyze the same reaction for bacteriochlorophyllide d (BChlide d) to give rise to bacteriochlorophyllide f (BChlide f). The protein is Bacteriochlorophyllide c C-7(1)-hydroxylase of Chlorobaculum limnaeum.